Here is a 276-residue protein sequence, read N- to C-terminus: Autophagy-related protein 27 (276 aa).

Residues 1–15 form the signal peptide; sequence MKSAIIGYMAVAVAA. Residues 16–175 form the MRH domain; it reads ASCQFTVDSK…NWKTPAACIN (160 aa). Residues 16 to 203 are Lumenal-facing; the sequence is ASCQFTVDSK…GDDASNGNPS (188 aa). Disulfide bonds link Cys-18-Cys-58, Cys-73-Cys-80, and Cys-143-Cys-173. The tract at residues 174–198 is disordered; that stretch reads INDGSKPKQPVKEPGKTPNDGDDAS. The chain crosses the membrane as a helical span at residues 204 to 224; that stretch reads WGWFTWLFIIIVLGVAVYIIG. Topologically, residues 225-276 are cytoplasmic; the sequence is NAWINYDRYGNAGVDLLPHADSLRDVPYLIRDLIAKVVGTFTGSSRTGYSAV.

The protein belongs to the ATG27 family.

The protein localises to the cytoplasmic vesicle membrane. The protein resides in the golgi apparatus membrane. It localises to the mitochondrion membrane. It is found in the preautophagosomal structure membrane. Effector of VPS34 phosphatidylinositol 3-phosphate kinase signaling. Regulates the cytoplasm to vacuole transport (Cvt) vesicle formation. Plays a role in ATG protein retrieval from the pre-autophagosomal structure (PAS) and is especially required for autophagy-dependent cycling of ATG9. The chain is Autophagy-related protein 27 (ATG27) from Yarrowia lipolytica (strain CLIB 122 / E 150) (Yeast).